The primary structure comprises 198 residues: DNA polymerase zeta subunit 2 (198 aa).

Residues 4-196 (EIKADIIVEA…DLGLKMDVLI (193 aa)) enclose the HORMA domain.

This sequence belongs to the MAD2 family. Accessory subunit of the zeta DNA polymerase complex, which consists of the catalytic component PolZ1/DNApol-zeta and PolZ2/Rev7. Interacts with the apurinic/apyrimidinic (AP) endonuclease Rrp1 (via the N-terminus).

In terms of biological role, as the accessory component of the DNA polymerase zeta complex, involved in translesion DNA synthesis (TLS) and various DNA repair mechanisms. Promotes the apurinic/apyrimidinic (AP) endonuclease activity of Rrp1 and is therefore likely to be involved in the base excision repair (BER) pathway responsible for repair of DNA lesions. It does not appear to influence the synthesis activity of the catalytic component Dmpol-zeta. This chain is DNA polymerase zeta subunit 2, found in Drosophila melanogaster (Fruit fly).